The chain runs to 488 residues: Bifunctional protein HldE (488 aa).

Residues 1–330 (MDRKSIESIF…NAVALAHSDS (330 aa)) are ribokinase. 205–208 (NRRE) serves as a coordination point for ATP. The active site involves Asp275. The interval 356–488 (FTNGCFDLLH…IIERVLERYS (133 aa)) is cytidylyltransferase.

In the N-terminal section; belongs to the carbohydrate kinase PfkB family. It in the C-terminal section; belongs to the cytidylyltransferase family. As to quaternary structure, homodimer.

The catalysed reaction is D-glycero-beta-D-manno-heptose 7-phosphate + ATP = D-glycero-beta-D-manno-heptose 1,7-bisphosphate + ADP + H(+). It carries out the reaction D-glycero-beta-D-manno-heptose 1-phosphate + ATP + H(+) = ADP-D-glycero-beta-D-manno-heptose + diphosphate. It participates in nucleotide-sugar biosynthesis; ADP-L-glycero-beta-D-manno-heptose biosynthesis; ADP-L-glycero-beta-D-manno-heptose from D-glycero-beta-D-manno-heptose 7-phosphate: step 1/4. The protein operates within nucleotide-sugar biosynthesis; ADP-L-glycero-beta-D-manno-heptose biosynthesis; ADP-L-glycero-beta-D-manno-heptose from D-glycero-beta-D-manno-heptose 7-phosphate: step 3/4. Its function is as follows. Catalyzes the phosphorylation of D-glycero-D-manno-heptose 7-phosphate at the C-1 position to selectively form D-glycero-beta-D-manno-heptose-1,7-bisphosphate. In terms of biological role, catalyzes the ADP transfer from ATP to D-glycero-beta-D-manno-heptose 1-phosphate, yielding ADP-D-glycero-beta-D-manno-heptose. In Pelobacter propionicus (strain DSM 2379 / NBRC 103807 / OttBd1), this protein is Bifunctional protein HldE.